The chain runs to 1561 residues: Formin-E (1561 aa).

The span at 1–28 (MDNHSSSSNPSSLSSSSSSSSSSSSFLS) shows a compositional bias: low complexity. 4 disordered regions span residues 1–63 (MDNH…EEKP), 77–187 (EEEE…GKLS), 211–279 (PIIV…SSED), and 305–365 (ILRS…NLNY). The segment covering 29-51 (DHVKKEEQNGLDTIKEEIENKIE) has biased composition (basic and acidic residues). Residues 32–85 (KKEEQNGLDTIKEEIENKIENEEEEEKIEEKPIEKVEEEKIIVQKEEEEKIEEE) are a coiled coil. Positions 80–89 (EKIEEEPIEK) are enriched in acidic residues. Positions 103–120 (DNINTTVEAKTLETSTEP) are enriched in polar residues. A coiled-coil region spans residues 158-208 (EQQEQQEKQKEETKPSIREEVKEKIKGKLSEIKEEIKDIKEEIKHVIREEV). Residues 162 to 187 (QQEKQKEETKPSIREEVKEKIKGKLS) show a composition bias toward basic and acidic residues. The span at 220 to 229 (SPPPPPPPPS) shows a compositional bias: pro residues. Residues 230–258 (ITVQSSSPVSSQISSPVSSPVSSPKPSVT) are compositionally biased toward low complexity. Residues 305-320 (ILRSKSSPNPGANNPN) are compositionally biased toward polar residues. The span at 326 to 365 (NNSSSSSSSNNNSDNNNNSDNNSNNNNINNNNSSSNNLNY) shows a compositional bias: low complexity. The segment at 379–427 (YHDFKIHRGTSSCVYCGENTRLWSTSYKCFFCGVVCHKKCLDSMNTIPC) adopts a Phorbol-ester/DAG-type zinc-finger fold. A compositionally biased stretch (low complexity) spans 465–534 (PSSITNSSSK…TSISSPPIAS (70 aa)). A disordered region spans residues 465-549 (PSSITNSSSK…PLLQQQQQQQ (85 aa)). A coiled-coil region spans residues 541 to 573 (LLQQQQQQQQQQQQQQQQQQQQQQQQQQISTTQ). The GBD/FH3 domain occupies 581-929 (SEKPDDDMIN…QISLHKGGFE (349 aa)). The stretch at 952–989 (LNRKLGELEKQNIDKAMKIQEQDINIKSLLDLLKQLKD) forms a coiled coil. Disordered regions lie at residues 1009 to 1092 (MEPP…VPKP), 1466 to 1508 (EEKR…SDED), and 1526 to 1561 (RQAK…PNKN). Positions 1017-1033 (SVKSPDDPNNAAPIVVA) are enriched in low complexity. An FH1 domain is found at 1019-1081 (KSPDDPNNAA…LGAKKPPAGV (63 aa)). The span at 1034-1070 (PIPPPPPPISGAPPPPPPPPPPMKGGAGPPPPPPPPG) shows a compositional bias: pro residues. Low complexity predominate over residues 1071-1081 (KLGAKKPPAGV). The FH2 domain maps to 1086–1475 (PPKVPKPSHP…EEKRLQQKQQ (390 aa)). The stretch at 1398–1491 (LATASTEVEK…RKLTTSNESA (94 aa)) forms a coiled coil. A compositionally biased stretch (basic and acidic residues) spans 1466 to 1481 (EEKRLQQKQQRQERAV). Composition is skewed to polar residues over residues 1484 to 1498 (LTTS…PNHA) and 1536 to 1561 (HQIA…PNKN). The 31-residue stretch at 1488–1518 (NESASASPNHAKSTDDKSDEDDDIVNDLLMA) folds into the DAD domain.

The protein belongs to the formin homology family. Diaphanous subfamily. Interacts (via GBD/FH3 domain) with activated Rho-GTPases.

Its function is as follows. Formins play an important role in the nucleation of actin and the formation of linear actin filaments. The polypeptide is Formin-E (forE) (Dictyostelium discoideum (Social amoeba)).